The following is a 451-amino-acid chain: Trigger factor (451 aa).

In terms of domain architecture, PPIase FKBP-type spans 165–250 (DDKLTIDFEG…LRQIQAREAL (86 aa)).

Belongs to the FKBP-type PPIase family. Tig subfamily.

The protein resides in the cytoplasm. It catalyses the reaction [protein]-peptidylproline (omega=180) = [protein]-peptidylproline (omega=0). Its function is as follows. Involved in protein export. Acts as a chaperone by maintaining the newly synthesized protein in an open conformation. Functions as a peptidyl-prolyl cis-trans isomerase. This chain is Trigger factor, found in Helicobacter pylori (strain Shi470).